The sequence spans 223 residues: MNLNKLKKKAAWAALDYIDPGTIIGVGTGTTIFYFIEALGTIKNLIYGAVSSSNSSTVLLKKHGIEVFDLKNFSSLAIYVDSADEINNHMQMIKGGGGALTREKIIASMSKKFVCIIDKSKKVDVLGTFPLPIEIIPMALSYIFREMIKIGGTPKYRKNVITDNGNIIIDVYNLCIKDPISMEKKINSLPGVVTVGLFASRSADIVLIGTQKGIRTINKKENR.

Substrate is bound by residues 28–31 (TGTT), 81–84 (DSAD), and 94–97 (KGGG). The Proton acceptor role is filled by E103. K121 contributes to the substrate binding site.

This sequence belongs to the ribose 5-phosphate isomerase family. In terms of assembly, homodimer.

The enzyme catalyses aldehydo-D-ribose 5-phosphate = D-ribulose 5-phosphate. It functions in the pathway carbohydrate degradation; pentose phosphate pathway; D-ribose 5-phosphate from D-ribulose 5-phosphate (non-oxidative stage): step 1/1. Catalyzes the reversible conversion of ribose-5-phosphate to ribulose 5-phosphate. The sequence is that of Ribose-5-phosphate isomerase A from Buchnera aphidicola subsp. Acyrthosiphon pisum (strain 5A).